The chain runs to 57 residues: Stress response protein (57 aa).

The Nuclear localization signal signature appears at 6 to 10 (RKERR).

In terms of tissue distribution, mesophyll protoplasts.

The protein resides in the nucleus. Its function is as follows. Stress response. May play a role in the reentering of protoplasts into the cell cycle. In Nicotiana sylvestris (Wood tobacco), this protein is Stress response protein.